A 217-amino-acid polypeptide reads, in one-letter code: Adenylate kinase (217 aa).

Residue 10–15 (GAGKGT) coordinates ATP. The tract at residues 30 to 59 (STGDIFRQNLRDNTDLGKLAKEYMDKGLLV) is NMP. AMP contacts are provided by residues Thr-31, Arg-36, 57–59 (LLV), 85–88 (GYPR), and Gln-92. Residues 126–163 (GRRVCPNCGATYHIKTSPPAVDNVCDKCGAQLIQRSDD) form an LID region. Arg-127 provides a ligand contact to ATP. Zn(2+)-binding residues include Cys-130 and Cys-133. Residue 136–137 (TY) coordinates ATP. Residues Cys-150 and Cys-153 each coordinate Zn(2+). Arg-160 and Arg-171 together coordinate AMP. Lys-199 provides a ligand contact to ATP.

The protein belongs to the adenylate kinase family. Monomer.

It is found in the cytoplasm. It carries out the reaction AMP + ATP = 2 ADP. The protein operates within purine metabolism; AMP biosynthesis via salvage pathway; AMP from ADP: step 1/1. Catalyzes the reversible transfer of the terminal phosphate group between ATP and AMP. Plays an important role in cellular energy homeostasis and in adenine nucleotide metabolism. This Thermoanaerobacter pseudethanolicus (strain ATCC 33223 / 39E) (Clostridium thermohydrosulfuricum) protein is Adenylate kinase.